The chain runs to 255 residues: Imidazole glycerol phosphate synthase subunit HisF (255 aa).

Catalysis depends on residues aspartate 11 and aspartate 130.

This sequence belongs to the HisA/HisF family. As to quaternary structure, heterodimer of HisH and HisF.

It localises to the cytoplasm. It catalyses the reaction 5-[(5-phospho-1-deoxy-D-ribulos-1-ylimino)methylamino]-1-(5-phospho-beta-D-ribosyl)imidazole-4-carboxamide + L-glutamine = D-erythro-1-(imidazol-4-yl)glycerol 3-phosphate + 5-amino-1-(5-phospho-beta-D-ribosyl)imidazole-4-carboxamide + L-glutamate + H(+). It functions in the pathway amino-acid biosynthesis; L-histidine biosynthesis; L-histidine from 5-phospho-alpha-D-ribose 1-diphosphate: step 5/9. Functionally, IGPS catalyzes the conversion of PRFAR and glutamine to IGP, AICAR and glutamate. The HisF subunit catalyzes the cyclization activity that produces IGP and AICAR from PRFAR using the ammonia provided by the HisH subunit. The protein is Imidazole glycerol phosphate synthase subunit HisF of Exiguobacterium sp. (strain ATCC BAA-1283 / AT1b).